The following is a 155-amino-acid chain: Small ribosomal subunit protein uS7 (155 aa).

It belongs to the universal ribosomal protein uS7 family. As to quaternary structure, part of the 30S ribosomal subunit. Contacts proteins S9 and S11.

Functionally, one of the primary rRNA binding proteins, it binds directly to 16S rRNA where it nucleates assembly of the head domain of the 30S subunit. Is located at the subunit interface close to the decoding center, probably blocks exit of the E-site tRNA. The protein is Small ribosomal subunit protein uS7 of Helicobacter pylori (strain Shi470).